A 260-amino-acid chain; its full sequence is Flagellar basal-body rod protein FlgG (260 aa).

The protein belongs to the flagella basal body rod proteins family. As to quaternary structure, the basal body constitutes a major portion of the flagellar organelle and consists of four rings (L,P,S, and M) mounted on a central rod. The rod consists of about 26 subunits of FlgG in the distal portion, and FlgB, FlgC and FlgF are thought to build up the proximal portion of the rod with about 6 subunits each.

It is found in the bacterial flagellum basal body. The polypeptide is Flagellar basal-body rod protein FlgG (flgG) (Escherichia coli O157:H7).